The chain runs to 289 residues: G1/S-specific cyclin-D2 (289 aa).

One can recognise a Cyclin N-terminal domain in the interval 26-151; sequence VLQNLLTIEE…VVLGKLKWNL (126 aa). A disordered region spans residues 264–289; sequence DQGDGSKSEDELDQASTPTDVRDIDL. Ser-271 carries the phosphoserine modification. Residue Thr-280 is modified to Phosphothreonine.

This sequence belongs to the cyclin family. Cyclin D subfamily. As to quaternary structure, interacts with either CDK4 or CDK6 protein kinase to form a serine/threonine kinase holoenzyme complex. The cyclin subunit imparts substrate specificity to the complex. Phosphorylation at Thr-280 by MAP kinases is required for ubiquitination and degradation by the DCX(AMBRA1) complex. Post-translationally, ubiquitinated by the DCX(AMBRA1) complex during the transition from G1 to S cell phase, leading to its degradation: ubiquitination is dependent on Thr-280 phosphorylation. The DCX(AMBRA1) complex represents the major regulator of CCND2 stability during the G1/S transition. Polyubiquitinated by the SCF(FBXL2) complex, leading to proteasomal degradation.

It localises to the nucleus. Its subcellular location is the cytoplasm. It is found in the nucleus membrane. Its function is as follows. Regulatory component of the cyclin D2-CDK4 (DC) complex that phosphorylates and inhibits members of the retinoblastoma (RB) protein family including RB1 and regulates the cell-cycle during G(1)/S transition. Phosphorylation of RB1 allows dissociation of the transcription factor E2F from the RB/E2F complex and the subsequent transcription of E2F target genes which are responsible for the progression through the G(1) phase. Hypophosphorylates RB1 in early G(1) phase. Cyclin D-CDK4 complexes are major integrators of various mitogenenic and antimitogenic signals. This Bos taurus (Bovine) protein is G1/S-specific cyclin-D2 (CCND2).